The chain runs to 1265 residues: DNA-directed RNA polymerase subunit beta'' (1265 aa).

Cys223, Cys297, Cys304, and Cys307 together coordinate Zn(2+).

The protein belongs to the RNA polymerase beta' chain family. RpoC2 subfamily. In plastids the minimal PEP RNA polymerase catalytic core is composed of four subunits: alpha, beta, beta', and beta''. When a (nuclear-encoded) sigma factor is associated with the core the holoenzyme is formed, which can initiate transcription. The cofactor is Zn(2+).

It is found in the plastid. Its subcellular location is the cyanelle. The enzyme catalyses RNA(n) + a ribonucleoside 5'-triphosphate = RNA(n+1) + diphosphate. Its function is as follows. DNA-dependent RNA polymerase catalyzes the transcription of DNA into RNA using the four ribonucleoside triphosphates as substrates. This chain is DNA-directed RNA polymerase subunit beta'', found in Cyanophora paradoxa.